A 479-amino-acid polypeptide reads, in one-letter code: Ribosomal RNA small subunit methyltransferase F (479 aa).

S-adenosyl-L-methionine-binding positions include Ala-125–Lys-131, Glu-149, Asp-176, and Asp-194. The Nucleophile role is filled by Cys-247.

The protein belongs to the class I-like SAM-binding methyltransferase superfamily. RsmB/NOP family.

The protein resides in the cytoplasm. It catalyses the reaction cytidine(1407) in 16S rRNA + S-adenosyl-L-methionine = 5-methylcytidine(1407) in 16S rRNA + S-adenosyl-L-homocysteine + H(+). Its function is as follows. Specifically methylates the cytosine at position 1407 (m5C1407) of 16S rRNA. The protein is Ribosomal RNA small subunit methyltransferase F of Salmonella typhi.